The chain runs to 406 residues: Cysteine desulfurase (406 aa).

K226 carries the N6-(pyridoxal phosphate)lysine modification. The Cysteine persulfide intermediate role is filled by C364.

This sequence belongs to the class-V pyridoxal-phosphate-dependent aminotransferase family. Csd subfamily. Homodimer. Interacts with SufE and the SufBCD complex composed of SufB, SufC and SufD. The interaction with SufE is required to mediate the direct transfer of the sulfur atom from the S-sulfanylcysteine. The cofactor is pyridoxal 5'-phosphate.

It localises to the cytoplasm. It catalyses the reaction (sulfur carrier)-H + L-cysteine = (sulfur carrier)-SH + L-alanine. The catalysed reaction is L-selenocysteine + AH2 = hydrogenselenide + L-alanine + A + H(+). It participates in cofactor biosynthesis; iron-sulfur cluster biosynthesis. Cysteine desulfurases mobilize the sulfur from L-cysteine to yield L-alanine, an essential step in sulfur metabolism for biosynthesis of a variety of sulfur-containing biomolecules. Component of the suf operon, which is activated and required under specific conditions such as oxidative stress and iron limitation. Acts as a potent selenocysteine lyase in vitro, that mobilizes selenium from L-selenocysteine. Selenocysteine lyase activity is however unsure in vivo. The chain is Cysteine desulfurase from Klebsiella pneumoniae (strain 342).